The sequence spans 156 residues: Small ribosomal subunit protein uS7 (156 aa).

This sequence belongs to the universal ribosomal protein uS7 family. Part of the 30S ribosomal subunit. Contacts proteins S9 and S11.

Functionally, one of the primary rRNA binding proteins, it binds directly to 16S rRNA where it nucleates assembly of the head domain of the 30S subunit. Is located at the subunit interface close to the decoding center, probably blocks exit of the E-site tRNA. This Burkholderia ambifaria (strain MC40-6) protein is Small ribosomal subunit protein uS7.